The primary structure comprises 83 residues: MSGSTGERPFSDILTSIRYWVIHSITIPSLFVAGWLFVSTGLAYDVFGSPRPNEYFTEERQTTPLITDRFNALQQMDILTEGL.

The chain crosses the membrane as a helical span at residues 21–35; the sequence is VIHSITIPSLFVAGW. H23 is a binding site for heme.

It belongs to the PsbE/PsbF family. As to quaternary structure, heterodimer of an alpha subunit and a beta subunit. PSII is composed of 1 copy each of membrane proteins PsbA, PsbB, PsbC, PsbD, PsbE, PsbF, PsbH, PsbI, PsbJ, PsbK, PsbL, PsbM, PsbT, PsbX, PsbY, PsbZ, Psb30/Ycf12, at least 3 peripheral proteins of the oxygen-evolving complex and a large number of cofactors. It forms dimeric complexes. Requires heme b as cofactor.

It localises to the plastid. The protein localises to the chloroplast thylakoid membrane. In terms of biological role, this b-type cytochrome is tightly associated with the reaction center of photosystem II (PSII). PSII is a light-driven water:plastoquinone oxidoreductase that uses light energy to abstract electrons from H(2)O, generating O(2) and a proton gradient subsequently used for ATP formation. It consists of a core antenna complex that captures photons, and an electron transfer chain that converts photonic excitation into a charge separation. The sequence is that of Cytochrome b559 subunit alpha from Nephroselmis olivacea (Green alga).